Here is a 238-residue protein sequence, read N- to C-terminus: MAEARLQRLLRVYVLDTSALTDTRLRSLLGSGSLDEAVRRFAELIASVRIAYGVEVYMPPTVYEEARRFLLSNGVTVQSFEALAAWITIKPPTRHEIRIPASIVRDYVEEVRARLARGLRVAEEHVRRAFEAGGLYAAETASREARREKLGAIIRGLRERYREATRHGMLDSVEDLDAVLLALEVRGVLVSNDEGVRRFAEALGVISIDPPKFISVLQGLLRHSKTGGVAREEAHSTS.

Belongs to the HARP family.

It catalyses the reaction Endonucleolytic cleavage of RNA, removing 5'-extranucleotides from tRNA precursor.. Its function is as follows. RNA-free RNase P that catalyzes the removal of the 5'-leader sequence from pre-tRNA to produce the mature 5'-terminus. The protein is RNA-free ribonuclease P of Hyperthermus butylicus (strain DSM 5456 / JCM 9403 / PLM1-5).